An 87-amino-acid polypeptide reads, in one-letter code: Small ribosomal subunit protein bS20 (87 aa).

Over residues 1 to 15 (MANHKSAAKRARQSI) the composition is skewed to basic residues. The interval 1 to 29 (MANHKSAAKRARQSIRKTAVNNARKSTVK) is disordered. Positions 19 to 29 (AVNNARKSTVK) are enriched in polar residues.

This sequence belongs to the bacterial ribosomal protein bS20 family.

Binds directly to 16S ribosomal RNA. The polypeptide is Small ribosomal subunit protein bS20 (Bdellovibrio bacteriovorus (strain ATCC 15356 / DSM 50701 / NCIMB 9529 / HD100)).